The sequence spans 107 residues: Parvalbumin beta 2 (107 aa).

The residue at position 1 (Ser1) is an N-acetylserine. EF-hand domains are found at residues 37–72 (XSPD…FSAS) and 89–107 (DADG…LVKQ). Positions 50, 52, 54, 56, 58, 61, 89, 91, 93, 95, and 100 each coordinate Ca(2+).

The protein belongs to the parvalbumin family.

Its function is as follows. In muscle, parvalbumin is thought to be involved in relaxation after contraction. It binds two calcium ions. This Oncorhynchus mykiss (Rainbow trout) protein is Parvalbumin beta 2.